A 243-amino-acid chain; its full sequence is Ubiquinone/menaquinone biosynthesis C-methyltransferase UbiE (243 aa).

S-adenosyl-L-methionine is bound by residues Thr-69, Asp-90, and 116–117; that span reads DA.

The protein belongs to the class I-like SAM-binding methyltransferase superfamily. MenG/UbiE family.

It carries out the reaction a 2-demethylmenaquinol + S-adenosyl-L-methionine = a menaquinol + S-adenosyl-L-homocysteine + H(+). The catalysed reaction is a 2-methoxy-6-(all-trans-polyprenyl)benzene-1,4-diol + S-adenosyl-L-methionine = a 5-methoxy-2-methyl-3-(all-trans-polyprenyl)benzene-1,4-diol + S-adenosyl-L-homocysteine + H(+). It participates in quinol/quinone metabolism; menaquinone biosynthesis; menaquinol from 1,4-dihydroxy-2-naphthoate: step 2/2. It functions in the pathway cofactor biosynthesis; ubiquinone biosynthesis. Its function is as follows. Methyltransferase required for the conversion of demethylmenaquinol (DMKH2) to menaquinol (MKH2) and the conversion of 2-polyprenyl-6-methoxy-1,4-benzoquinol (DDMQH2) to 2-polyprenyl-3-methyl-6-methoxy-1,4-benzoquinol (DMQH2). The sequence is that of Ubiquinone/menaquinone biosynthesis C-methyltransferase UbiE from Burkholderia ambifaria (strain MC40-6).